Here is a 396-residue protein sequence, read N- to C-terminus: NADH-quinone oxidoreductase subunit D (396 aa).

The protein belongs to the complex I 49 kDa subunit family. As to quaternary structure, NDH-1 is composed of 14 different subunits. Subunits NuoB, C, D, E, F, and G constitute the peripheral sector of the complex.

It localises to the cell inner membrane. The enzyme catalyses a quinone + NADH + 5 H(+)(in) = a quinol + NAD(+) + 4 H(+)(out). Its function is as follows. NDH-1 shuttles electrons from NADH, via FMN and iron-sulfur (Fe-S) centers, to quinones in the respiratory chain. The immediate electron acceptor for the enzyme in this species is believed to be ubiquinone. Couples the redox reaction to proton translocation (for every two electrons transferred, four hydrogen ions are translocated across the cytoplasmic membrane), and thus conserves the redox energy in a proton gradient. This Mesorhizobium japonicum (strain LMG 29417 / CECT 9101 / MAFF 303099) (Mesorhizobium loti (strain MAFF 303099)) protein is NADH-quinone oxidoreductase subunit D.